A 312-amino-acid polypeptide reads, in one-letter code: Pantothenate synthetase (312 aa).

42–49 contributes to the ATP binding site; that stretch reads MGALHTGH. The active-site Proton donor is the His-49. Residue Gln-73 coordinates (R)-pantoate. Gln-73 is a beta-alanine binding site. Residue 159–162 coordinates ATP; sequence GEKD. (R)-pantoate is bound at residue Gln-165. Residues Val-188 and 196-199 each bind ATP; that span reads LSSR.

This sequence belongs to the pantothenate synthetase family. As to quaternary structure, homodimer.

The protein resides in the cytoplasm. It catalyses the reaction (R)-pantoate + beta-alanine + ATP = (R)-pantothenate + AMP + diphosphate + H(+). The protein operates within cofactor biosynthesis; (R)-pantothenate biosynthesis; (R)-pantothenate from (R)-pantoate and beta-alanine: step 1/1. Functionally, catalyzes the condensation of pantoate with beta-alanine in an ATP-dependent reaction via a pantoyl-adenylate intermediate. In Rhodococcus jostii (strain RHA1), this protein is Pantothenate synthetase.